The chain runs to 259 residues: Phosphatidylglycerol--prolipoprotein diacylglyceryl transferase (259 aa).

4 helical membrane passes run 10 to 30, 50 to 70, 86 to 106, and 112 to 132; these read IGLLEIRWYSLAYIIGILFAY, IISWWVTGMILGGRIGYILFY, WKGGMSFHGASLGLFCTMYIF, and IKFLSAIDLCLCAVPVGIFLG. Position 133 (R133) interacts with a 1,2-diacyl-sn-glycero-3-phospho-(1'-sn-glycerol). A run of 3 helical transmembrane segments spans residues 169 to 189, 197 to 217, and 227 to 247; these read LYEAFFEGLLLFVVMNLLFFF, GMLFSIFMIWYGIVRFFIEFV, and ILFNWITMGQLLSFIMVILGI.

Belongs to the Lgt family.

It is found in the cell inner membrane. It carries out the reaction L-cysteinyl-[prolipoprotein] + a 1,2-diacyl-sn-glycero-3-phospho-(1'-sn-glycerol) = an S-1,2-diacyl-sn-glyceryl-L-cysteinyl-[prolipoprotein] + sn-glycerol 1-phosphate + H(+). Its pathway is protein modification; lipoprotein biosynthesis (diacylglyceryl transfer). Its function is as follows. Catalyzes the transfer of the diacylglyceryl group from phosphatidylglycerol to the sulfhydryl group of the N-terminal cysteine of a prolipoprotein, the first step in the formation of mature lipoproteins. The sequence is that of Phosphatidylglycerol--prolipoprotein diacylglyceryl transferase from Ehrlichia ruminantium (strain Welgevonden).